The following is a 494-amino-acid chain: Inositol-trisphosphate 3-kinase homolog (494 aa).

ATP-binding positions include serine 206, lysine 218, 260–262, and aspartate 276; that span reads EDL. Residues lysine 278 and 322 to 329 each bind substrate; that span reads KLRYMQFR. Residues lysine 346 and aspartate 426 each coordinate ATP. Lysine 429 is a binding site for substrate.

It belongs to the inositol phosphokinase (IPK) family. As to expression, expressed in spermatheca.

It catalyses the reaction 1D-myo-inositol 1,4,5-trisphosphate + ATP = 1D-myo-inositol 1,3,4,5-tetrakisphosphate + ADP + H(+). With respect to regulation, unlike mammalian IP3K, may not be regulated by calmodulin. Its function is as follows. Probably by regulating inositol 1,4,5-trisphosphate levels, negatively regulates posterior body wall muscle contractions required for defecation and let-23 signaling pathway that controls spermathecal dilation and ovulation. May also regulate ovulation downstream of actin cross-linker fln-1. This chain is Inositol-trisphosphate 3-kinase homolog, found in Caenorhabditis elegans.